We begin with the raw amino-acid sequence, 153 residues long: MAPKAEKKPAAKKPAEEEPAAEKAEKAPAGKKPKAEKRLPAGKAEKGSGEGRKAGRKKAKKSVETYKIYIFKVLKQVHPDIGISSKAMSIMNSFINDIFEKLAGESAKLARYNKKPTITSREIQTSVRLVLPGELAKHAVSEGTKAVTKFTSA.

Basic and acidic residues-rich tracts occupy residues 1-28 (MAPKAEKKPAAKKPAEEEPAAEKAEKAP) and 36-53 (EKRLPAGKAEKGSGEGRK). The interval 1–61 (MAPKAEKKPA…RKAGRKKAKK (61 aa)) is disordered. Lys7 and Lys37 each carry N6-acetyllysine. Lys149 participates in a covalent cross-link: Glycyl lysine isopeptide (Lys-Gly) (interchain with G-Cter in ubiquitin).

This sequence belongs to the histone H2B family. As to quaternary structure, the nucleosome is a histone octamer containing two molecules each of H2A, H2B, H3 and H4 assembled in one H3-H4 heterotetramer and two H2A-H2B heterodimers. The octamer wraps approximately 147 bp of DNA. Can be acetylated to form H2BK6ac and H2BK33ac. In terms of processing, monoubiquitinated by BRE1 to form H2BK143ub1 and deubiquitinated by UBP26. Required for heterochromatic histone H3 di- and trimethylation at H3K4me. May give a specific tag for epigenetic transcriptional activation.

It is found in the nucleus. It localises to the chromosome. Its function is as follows. Core component of nucleosome. Nucleosomes wrap and compact DNA into chromatin, limiting DNA accessibility to the cellular machineries which require DNA as a template. Histones thereby play a central role in transcription regulation, DNA repair, DNA replication and chromosomal stability. DNA accessibility is regulated via a complex set of post-translational modifications of histones, also called histone code, and nucleosome remodeling. In Oryza sativa subsp. japonica (Rice), this protein is Histone H2B.3 (H2B.3).